The following is a 211-amino-acid chain: Ribosomal RNA small subunit methyltransferase G (211 aa).

Residues Gly73, 126–127 (IE), and Arg142 each bind S-adenosyl-L-methionine.

It belongs to the methyltransferase superfamily. RNA methyltransferase RsmG family.

The protein resides in the cytoplasm. It catalyses the reaction guanosine(527) in 16S rRNA + S-adenosyl-L-methionine = N(7)-methylguanosine(527) in 16S rRNA + S-adenosyl-L-homocysteine. Its function is as follows. Specifically methylates the N7 position of guanine in position 527 of 16S rRNA. This Methylorubrum extorquens (strain PA1) (Methylobacterium extorquens) protein is Ribosomal RNA small subunit methyltransferase G.